The chain runs to 293 residues: D-alanine--D-alanine ligase (293 aa).

Positions 98-291 (KIIWKQHNLT…FNKLVVAIIN (194 aa)) constitute an ATP-grasp domain. 124 to 177 (DFPLPWMVKPTLEGSSIGISKVDSQIQLNNALMLAWQYNSHALIEQWIEGDEYT) serves as a coordination point for ATP. Mg(2+) contacts are provided by Asp245, Glu258, and Asn260.

It belongs to the D-alanine--D-alanine ligase family. The cofactor is Mg(2+). Requires Mn(2+) as cofactor.

Its subcellular location is the cytoplasm. It catalyses the reaction 2 D-alanine + ATP = D-alanyl-D-alanine + ADP + phosphate + H(+). The protein operates within cell wall biogenesis; peptidoglycan biosynthesis. In terms of biological role, cell wall formation. This chain is D-alanine--D-alanine ligase, found in Ruthia magnifica subsp. Calyptogena magnifica.